The sequence spans 313 residues: B3 domain-containing protein At2g31720 (313 aa).

The tract at residues 80-110 is disordered; that stretch reads KNQDPEQNPNRVASSPSSCHLESKRPQKVVS. The segment covering 84-99 has biased composition (polar residues); that stretch reads PEQNPNRVASSPSSCH. Residues 169 to 267 constitute a DNA-binding region (TF-B3); the sequence is WKQILDMDFL…MLFFAFVLSD (99 aa).

The protein localises to the nucleus. This chain is B3 domain-containing protein At2g31720 (ARF70), found in Arabidopsis thaliana (Mouse-ear cress).